We begin with the raw amino-acid sequence, 148 residues long: Glycine cleavage system H protein 5 (148 aa).

Residues 33 to 115 (VFTIGLTSVA…YGQGWIAKVK (83 aa)) enclose the Lipoyl-binding domain. Lys74 carries the post-translational modification N6-lipoyllysine.

The protein belongs to the GcvH family. In terms of assembly, the glycine cleavage system is composed of four proteins: P, T, L and H. (R)-lipoate is required as a cofactor.

Functionally, the glycine cleavage system catalyzes the degradation of glycine. The H protein shuttles the methylamine group of glycine from the P protein to the T protein. This is Glycine cleavage system H protein 5 from Aquifex aeolicus (strain VF5).